Reading from the N-terminus, the 405-residue chain is DNA polymerase IV 1 (405 aa).

The UmuC domain occupies 23–203 (IAHIDCDAFY…RPVTTIWGVG (181 aa)). The Mg(2+) site is built by Asp-27 and Asp-120. Glu-121 is a catalytic residue.

This sequence belongs to the DNA polymerase type-Y family. In terms of assembly, monomer. Mg(2+) is required as a cofactor.

The protein localises to the cytoplasm. The catalysed reaction is DNA(n) + a 2'-deoxyribonucleoside 5'-triphosphate = DNA(n+1) + diphosphate. Functionally, poorly processive, error-prone DNA polymerase involved in untargeted mutagenesis. Copies undamaged DNA at stalled replication forks, which arise in vivo from mismatched or misaligned primer ends. These misaligned primers can be extended by PolIV. Exhibits no 3'-5' exonuclease (proofreading) activity. May be involved in translesional synthesis, in conjunction with the beta clamp from PolIII. The polypeptide is DNA polymerase IV 1 (dinB1) (Agrobacterium fabrum (strain C58 / ATCC 33970) (Agrobacterium tumefaciens (strain C58))).